A 198-amino-acid polypeptide reads, in one-letter code: MQYPEPISKLIDSFMKLPGIGPKTAVRLAFFVLGMKEDTVLDFAKALVNAKRNLTYCSICGHITDQDPCYICEDTRRDKSVICVVQDPKDVIAMEKMKEYNGQYHVLHGAISPMDGIGPEDIKIPELLKRLQDDQVTEVILATNPNIEGEATAMYISRLLKPSGIKLSRIAHGLPVGGDLEYADEVTLSKALEGRREL.

A C4-type zinc finger spans residues 57–72 (CSICGHITDQDPCYIC). The Toprim domain maps to 80–175 (SVICVVQDPK…KLSRIAHGLP (96 aa)).

This sequence belongs to the RecR family.

May play a role in DNA repair. It seems to be involved in an RecBC-independent recombinational process of DNA repair. It may act with RecF and RecO. The protein is Recombination protein RecR of Bacillus velezensis (strain DSM 23117 / BGSC 10A6 / LMG 26770 / FZB42) (Bacillus amyloliquefaciens subsp. plantarum).